The chain runs to 219 residues: Ras-related protein Rab-3 (219 aa).

GTP contacts are provided by residues 29–37 (GNSSVGKTS), 48–54 (TSAFVST), 77–81 (DTAGQ), 135–138 (NKCD), and 165–167 (SAK). The short motif at 51–59 (FVSTVGIDF) is the Effector region element. Residues 191-219 (LDKDPQQQPKGQKLEANPTQKPAQQQCNC) form a disordered region. Residues 207–219 (NPTQKPAQQQCNC) show a composition bias toward polar residues. S-geranylgeranyl cysteine attachment occurs at residues Cys-217 and Cys-219. Cys-219 is subject to Cysteine methyl ester.

It belongs to the small GTPase superfamily. Rab family.

It is found in the cell membrane. In terms of biological role, involved in exocytosis by regulating a late step in synaptic vesicle fusion. Could play a role in neurotransmitter release by regulating membrane flow in the nerve terminal. Plays a role in the recruitment of endophilin unc-57 to synaptic vesicles. Probably by controlling dense-core vesicle trafficking, plays a role in the AVG neuron-mediated formation of the right axon tract of the ventral nerve cord. The sequence is that of Ras-related protein Rab-3 (rab-3) from Caenorhabditis elegans.